The sequence spans 830 residues: Scavenger receptor class F member 1 (830 aa).

The N-terminal stretch at 1 to 19 (MGLGLLLPLLLLWTRGTQG) is a signal peptide. Residues 20–421 (SELDPKGQHV…CQPGSGSRDT (402 aa)) are Extracellular-facing. EGF-like domains follow at residues 53-87 (TIPI…AHCS), 95-130 (WGPD…ARCE), 155-191 (WSST…RRCS), and 215-249 (WGPE…ARCE). Cystine bridges form between C57-C69, C63-C75, C77-C86, C99-C111, C105-C118, C120-C129, C159-C172, C165-C179, C181-C190, C219-C230, C225-C237, and C239-C248. Residue N289 is glycosylated (N-linked (GlcNAc...) asparagine). 2 consecutive EGF-like domains span residues 302–339 (FGES…PRCE) and 351–382 (CGST…PSCN). 6 disulfides stabilise this stretch: C306-C319, C313-C326, C329-C338, C355-C363, C358-C370, and C372-C381. N-linked (GlcNAc...) asparagine glycans are attached at residues N382 and N393. The chain crosses the membrane as a helical span at residues 422 to 442 (ALIAGSLVPLLLLFLGLACCA). The Cytoplasmic portion of the chain corresponds to 443 to 830 (CCCWAPRSDL…VVPISRPPEP (388 aa)). 3 disordered regions span residues 516–539 (GWAT…PAYC), 581–688 (SLAR…SGPV), and 715–830 (FQKG…PPEP). Phosphoserine occurs at positions 589 and 606. Residues 634 to 643 (ESTGPEEAEA) are compositionally biased toward acidic residues. Over residues 644–653 (PESFPAAASP) the composition is skewed to low complexity.

In terms of assembly, heterophilic interaction with SREC2 via its extracellular domain. The heterophilic interaction is suppressed by the presence of ligand such as Ac-LDL. Interacts with AVIL. In terms of tissue distribution, endothelial cells.

The protein resides in the membrane. Mediates the binding and degradation of acetylated low density lipoprotein (Ac-LDL). Mediates heterophilic interactions, suggesting a function as adhesion protein. Plays a role in the regulation of neurite-like outgrowth. The protein is Scavenger receptor class F member 1 (SCARF1) of Homo sapiens (Human).